The chain runs to 462 residues: tRNA modification GTPase MnmE (462 aa).

(6S)-5-formyl-5,6,7,8-tetrahydrofolate contacts are provided by R23, E88, and R127. The 160-residue stretch at 224–383 folds into the TrmE-type G domain; it reads GLATVIIGRP…LEKAIADLFF (160 aa). N234 serves as a coordination point for K(+). GTP is bound by residues 234-239, 253-259, and 278-281; these read NVGKSS, TDIPGTT, and DTAG. S238 is a binding site for Mg(2+). K(+) contacts are provided by T253, I255, and T258. T259 lines the Mg(2+) pocket. K462 provides a ligand contact to (6S)-5-formyl-5,6,7,8-tetrahydrofolate.

Belongs to the TRAFAC class TrmE-Era-EngA-EngB-Septin-like GTPase superfamily. TrmE GTPase family. Homodimer. Heterotetramer of two MnmE and two MnmG subunits. K(+) serves as cofactor.

It is found in the cytoplasm. Functionally, exhibits a very high intrinsic GTPase hydrolysis rate. Involved in the addition of a carboxymethylaminomethyl (cmnm) group at the wobble position (U34) of certain tRNAs, forming tRNA-cmnm(5)s(2)U34. In Geobacillus thermodenitrificans (strain NG80-2), this protein is tRNA modification GTPase MnmE.